Consider the following 288-residue polypeptide: Nucleotide-binding protein Veis_1053 (288 aa).

10–17 (GMSGSGKS) contributes to the ATP binding site. 59–62 (DVRS) serves as a coordination point for GTP.

It belongs to the RapZ-like family.

Functionally, displays ATPase and GTPase activities. This Verminephrobacter eiseniae (strain EF01-2) protein is Nucleotide-binding protein Veis_1053.